Consider the following 29-residue polypeptide: Cyclotide psyleio A (29 aa).

Residues G1–D29 constitute a cross-link (cyclopeptide (Gly-Asp)). 3 cysteine pairs are disulfide-bonded: C5–C19, C9–C21, and C14–C26.

This is a cyclic peptide.

Probably participates in a plant defense mechanism. This chain is Cyclotide psyleio A, found in Psychotria brachyceras.